The sequence spans 441 residues: Zinc finger protein ZIC 3 (441 aa).

The segment at 222–257 adopts a C2H2-type 1; atypical zinc-finger fold; that stretch reads LSCKWLEESPMNRPQKTCDRTFSSMHELVTHMTMEH. The C2H2-type 2; atypical zinc finger occupies 266-293; it reads HICYWEECPRGGKSFKAKYKLVNHIRVH. C2H2-type zinc fingers lie at residues 299-323, 329-353, and 359-381; these read FPCP…KRTH, FKCE…MHVH, and YICK…MKVH. Positions 375–441 are disordered; the sequence is RKHMKVHESQ…LPPNFNEWYV (67 aa). Positions 383 to 399 are enriched in low complexity; sequence SQGSDSSPAASSGYESA. The span at 406-429 shows a compositional bias: polar residues; it reads SANSEEPSKNSSATHQTNNSSHNT.

This sequence belongs to the GLI C2H2-type zinc-finger protein family.

It localises to the nucleus. It is found in the cytoplasm. Probably acts as a transcriptional activator. May bind to the minimal GLI-consensus sequence 5'-GGGTGGTC-3'. Can determine the ectodermal cell fate and promote the earliest step of neural and neural crest development. Involved in establishing left-right asymmetry in the embryo. This Xenopus tropicalis (Western clawed frog) protein is Zinc finger protein ZIC 3 (zic3).